The sequence spans 348 residues: Oxygen-dependent coproporphyrinogen-III oxidase (348 aa).

Position 104 (S104) interacts with substrate. Residues H108 and H118 each contribute to the a divalent metal cation site. H118 acts as the Proton donor in catalysis. 120 to 122 (NYR) lines the substrate pocket. A divalent metal cation is bound by residues H152 and H182. An important for dimerization region spans residues 272–307 (YAEFNLVWDRGTIFGLQTNGRTESILMSLPPLARWE).

Belongs to the aerobic coproporphyrinogen-III oxidase family. Homodimer. A divalent metal cation is required as a cofactor.

Its subcellular location is the cytoplasm. It catalyses the reaction coproporphyrinogen III + O2 + 2 H(+) = protoporphyrinogen IX + 2 CO2 + 2 H2O. It participates in porphyrin-containing compound metabolism; protoporphyrin-IX biosynthesis; protoporphyrinogen-IX from coproporphyrinogen-III (O2 route): step 1/1. Involved in the heme and chlorophyll biosynthesis. Catalyzes the aerobic oxidative decarboxylation of propionate groups of rings A and B of coproporphyrinogen-III to yield the vinyl groups in protoporphyrinogen-IX. The sequence is that of Oxygen-dependent coproporphyrinogen-III oxidase from Prochlorococcus marinus (strain NATL1A).